The chain runs to 797 residues: LPS-assembly protein LptD (797 aa).

The signal sequence occupies residues 1 to 30 (MKEGRKRLRAGYCYMLAGVVGVASTGSSRA).

Belongs to the LptD family. As to quaternary structure, component of the lipopolysaccharide transport and assembly complex. Interacts with LptE and LptA.

The protein localises to the cell outer membrane. Its function is as follows. Together with LptE, is involved in the assembly of lipopolysaccharide (LPS) at the surface of the outer membrane. This Hahella chejuensis (strain KCTC 2396) protein is LPS-assembly protein LptD.